A 98-amino-acid polypeptide reads, in one-letter code: Small ribosomal subunit protein bS20 (98 aa).

Positions 1–15 (MAPKKTTKKGGPKKR) are enriched in basic residues. Residues 1–21 (MAPKKTTKKGGPKKRPSAEKR) are disordered.

It belongs to the bacterial ribosomal protein bS20 family.

Functionally, binds directly to 16S ribosomal RNA. The polypeptide is Small ribosomal subunit protein bS20 (Chlamydia felis (strain Fe/C-56) (Chlamydophila felis)).